Reading from the N-terminus, the 312-residue chain is MIRIGTRGSLLATTQAGTIRDALIAAGHDAELVIISTEGDRRADEPIADIGVGVFTAALREAIADNVVDAAVHSYKDLPTAVDPRFMIAATPVREDARDALVARDGMVLGELPAGSVIGTSSPRRVAQLKALGLGLEIRPLRGNLDTRLNRVSSGELDAIVVAKAGLSRIGRLEVVTETLEPVQMLPAPAQGALAIECRAGDTALAQLLAELDDADTRAAVTAERTLLAELEAGCSAPVGAIAEVVESIDEDGRVFEELSLRGCVATLDGSDVIRASGIGSPDRARELGLSVAAELFDLGARDLLDERGRDT.

An S-(dipyrrolylmethanemethyl)cysteine modification is found at Cys-235.

This sequence belongs to the HMBS family. In terms of assembly, monomer. Requires dipyrromethane as cofactor.

The enzyme catalyses 4 porphobilinogen + H2O = hydroxymethylbilane + 4 NH4(+). It participates in porphyrin-containing compound metabolism; protoporphyrin-IX biosynthesis; coproporphyrinogen-III from 5-aminolevulinate: step 2/4. Tetrapolymerization of the monopyrrole PBG into the hydroxymethylbilane pre-uroporphyrinogen in several discrete steps. This chain is Porphobilinogen deaminase, found in Mycolicibacterium gilvum (strain PYR-GCK) (Mycobacterium gilvum (strain PYR-GCK)).